Consider the following 346-residue polypeptide: 3 beta-hydroxysteroid dehydrogenase/Delta 5--&gt;4-isomerase (346 aa).

Tyrosine 147 serves as the catalytic Proton acceptor. Residue lysine 151 participates in NAD(+) binding.

It belongs to the 3-beta-HSD family.

The catalysed reaction is a 3beta-hydroxy-Delta(5)-steroid + NAD(+) = a 3-oxo-Delta(5)-steroid + NADH + H(+). The enzyme catalyses a 3-oxo-Delta(5)-steroid = a 3-oxo-Delta(4)-steroid. Its pathway is lipid metabolism; steroid biosynthesis. Its function is as follows. Catalyzes the oxidative conversion of Delta(5)-ene-3-beta-hydroxy steroid, and the oxidative conversion of ketosteroids. The 3-beta-HSD enzymatic system plays a crucial role in the biosynthesis of all classes of hormonal steroids. During viral infection, steroid production contributes to virulence by inhibiting the host inflammatory response. The chain is 3 beta-hydroxysteroid dehydrogenase/Delta 5--&gt;4-isomerase (OPG174) from Monkeypox virus.